The sequence spans 206 residues: Protein tyrosine phosphatase receptor type C-associated protein (206 aa).

The chain crosses the membrane as a helical span at residues 34-54; the sequence is VTVVLLLLLLLLLATGLALAW. Positions 98-173 are disordered; that stretch reads GSTDNDLERQ…PGPASAGGSA (76 aa). Phosphoserine is present on residues Ser-99 and Ser-153. Low complexity predominate over residues 161-173; sequence LGSPGPASAGGSA.

Interacts with CD45/PTPRC. Post-translationally, phosphorylated on tyrosine residues.

The protein localises to the membrane. In Homo sapiens (Human), this protein is Protein tyrosine phosphatase receptor type C-associated protein (PTPRCAP).